A 412-amino-acid chain; its full sequence is Transforming growth factor beta-2 proprotein (412 aa).

An N-terminal signal peptide occupies residues 1–20 (MHCYLLSVFLTLDLAAVALS). N-linked (GlcNAc...) asparagine glycans are attached at residues N72, N139, and N240. Cystine bridges form between C307/C316, C315/C378, C344/C409, and C348/C411.

Belongs to the TGF-beta family. As to quaternary structure, interacts with Transforming growth factor beta-2 (TGF-beta-2) chain; interaction is non-covalent and maintains (TGF-beta-2) in a latent state. Homodimer; disulfide-linked. Interacts with TGF-beta receptors (TGFBR1 and TGFBR2), leading to signal transduction. Post-translationally, the precursor proprotein is cleaved in the Golgi apparatus to form Transforming growth factor beta-2 (TGF-beta-2) and Latency-associated peptide (LAP) chains, which remain non-covalently linked, rendering TGF-beta-2 inactive.

It localises to the secreted. The protein localises to the extracellular space. Its subcellular location is the extracellular matrix. Functionally, precursor of the Latency-associated peptide (LAP) and Transforming growth factor beta-2 (TGF-beta-2) chains, which constitute the regulatory and active subunit of TGF-beta-2, respectively. In terms of biological role, required to maintain the Transforming growth factor beta-2 (TGF-beta-2) chain in a latent state during storage in extracellular matrix. Associates non-covalently with TGF-beta-2 and regulates its activation via interaction with 'milieu molecules', such as LTBP1 and LRRC32/GARP, that control activation of TGF-beta-2. Multifunctional protein that regulates various processes such as angiogenesis and heart development. Activation into mature form follows different steps: following cleavage of the proprotein in the Golgi apparatus, Latency-associated peptide (LAP) and Transforming growth factor beta-2 (TGF-beta-2) chains remain non-covalently linked rendering TGF-beta-2 inactive during storage in extracellular matrix. At the same time, LAP chain interacts with 'milieu molecules', such as LTBP1 and LRRC32/GARP, that control activation of TGF-beta-2 and maintain it in a latent state during storage in extracellular milieus. Once activated following release of LAP, TGF-beta-2 acts by binding to TGF-beta receptors (TGFBR1 and TGFBR2), which transduce signal. The protein is Transforming growth factor beta-2 proprotein (TGFB2) of Gallus gallus (Chicken).